The chain runs to 473 residues: MAMAAEQWVLVEMVQALYEAPAYHLILEGILILWIIRLVFSKTYKLQERSDLTAKEKEELIEEWQPEPLVPPVSKNHPALNYNIVSGPPTHNIVVNGKECVNFASFNFLGLLANPRVKAAALASLKKYGVGTCGPRGFYGTFDVHLDLEERLAKFMRTEEAIIYSYGFSTIASAIPAYSKRGDIVFVDSAACFAIQKGLQASRSDIKLFKHNDVADLERLLKEQEIEDQKNPRKARVTRRFIVVEGLYMNTGTVCPLPELVKLKYKYKARIFLEESLSFGVLGEHGRGVTEHYGISIDDIDLISANMENALASVGGFCCGRSFVVDHQRLSGQGYCFSASLPPLLAAAAIEALNIMEENPGIFAVLKKKCQHIHKSLQGISGLKVVGESLSPALHLQLEESTGSREKDVQLLQEMVIHCMNEGIALTQARYLDKEEKCLPPPSIRVVVTVEQTEEELERAASTIREAAQAVLL.

Over 1-15 (MAMAAEQWVLVEMVQ) the chain is Lumenal. Positions 1–66 (MAMAAEQWVL…KEELIEEWQP (66 aa)) are interaction with SPTLC2. Residues 16–36 (ALYEAPAYHLILEGILILWII) traverse the membrane as a helical segment. Residues 37–473 (RLVFSKTYKL…IREAAQAVLL (437 aa)) are Cytoplasmic-facing. The residue at position 164 (Tyr-164) is a Phosphotyrosine; by ABL.

This sequence belongs to the class-II pyridoxal-phosphate-dependent aminotransferase family. Component of the serine palmitoyltransferase (SPT) complex, which is also composed of SPTLC2 or SPTLC3 and SPTSSA or SPTSSB. The heterodimer with SPTLC2 or SPTLC3 forms the catalytic core of the enzyme, while SPTSSA or SPTSSB subunits determine substrate specificity. SPT also interacts with ORMDL proteins, especially ORMDL3, which negatively regulate SPT activity in the presence of ceramides. Forms dimers of heterodimers with SPTLC2. Interacts with RTN4. Requires pyridoxal 5'-phosphate as cofactor. In terms of processing, phosphorylation at Tyr-164 inhibits activity and promotes cell survival.

Its subcellular location is the endoplasmic reticulum membrane. It catalyses the reaction L-serine + hexadecanoyl-CoA + H(+) = 3-oxosphinganine + CO2 + CoA. The enzyme catalyses octadecanoyl-CoA + L-serine + H(+) = 3-oxoeicosasphinganine + CO2 + CoA. It carries out the reaction tetradecanoyl-CoA + L-serine + H(+) = 3-oxohexadecasphinganine + CO2 + CoA. The catalysed reaction is dodecanoyl-CoA + L-serine + H(+) = 3-oxotetradecasphinganine + CO2 + CoA. The protein operates within lipid metabolism; sphingolipid metabolism. With respect to regulation, SPT complex catalytic activity is negatively regulated by ORMDL proteins, including ORMDL3, in the presence of ceramides. This mechanism allows to maintain ceramide levels at sufficient concentrations for the production of complex sphingolipids, but which prevents the accumulation of ceramides to levels that trigger apoptosis. Its function is as follows. Component of the serine palmitoyltransferase multisubunit enzyme (SPT) that catalyzes the initial and rate-limiting step in sphingolipid biosynthesis by condensing L-serine and activated acyl-CoA (most commonly palmitoyl-CoA) to form long-chain bases. The SPT complex is also composed of SPTLC2 or SPTLC3 and SPTSSA or SPTSSB. Within this complex, the heterodimer with SPTLC2 or SPTLC3 forms the catalytic core. The composition of the serine palmitoyltransferase (SPT) complex determines the substrate preference. The SPTLC1-SPTLC2-SPTSSA complex shows a strong preference for C16-CoA substrate, while the SPTLC1-SPTLC3-SPTSSA isozyme uses both C14-CoA and C16-CoA as substrates, with a slight preference for C14-CoA. The SPTLC1-SPTLC2-SPTSSB complex shows a strong preference for C18-CoA substrate, while the SPTLC1-SPTLC3-SPTSSB isozyme displays an ability to use a broader range of acyl-CoAs, without apparent preference. Required for adipocyte cell viability and metabolic homeostasis. The chain is Serine palmitoyltransferase 1 (SPTLC1) from Cricetulus griseus (Chinese hamster).